The primary structure comprises 284 residues: Tryptophan 2,3-dioxygenase (284 aa).

Residues Phe51–His55, Tyr113, and Arg117 each bind substrate. His240 contacts heme. Thr254 is a binding site for substrate.

Belongs to the tryptophan 2,3-dioxygenase family. As to quaternary structure, homotetramer. Heme is required as a cofactor.

The enzyme catalyses L-tryptophan + O2 = N-formyl-L-kynurenine. Its pathway is amino-acid degradation; L-tryptophan degradation via kynurenine pathway; L-kynurenine from L-tryptophan: step 1/2. Its function is as follows. Heme-dependent dioxygenase that catalyzes the oxidative cleavage of the L-tryptophan (L-Trp) pyrrole ring and converts L-tryptophan to N-formyl-L-kynurenine. Catalyzes the oxidative cleavage of the indole moiety. The sequence is that of Tryptophan 2,3-dioxygenase from Rhodococcus jostii (strain RHA1).